The sequence spans 152 residues: UPF0266 membrane protein YobD (152 aa).

The next 3 membrane-spanning stretches (helical) occupy residues 6 to 26 (LVLILFIAALLAYALYDQFIM), 45 to 65 (VDSVIFVGLVAILIYNNVTSH), and 67 to 87 (AQMTTWLLSALALMGFYIFWI).

Belongs to the UPF0266 family.

The protein localises to the cell inner membrane. The polypeptide is UPF0266 membrane protein YobD (Salmonella paratyphi B (strain ATCC BAA-1250 / SPB7)).